A 266-amino-acid polypeptide reads, in one-letter code: 15-hydroxyprostaglandin dehydrogenase [NAD(+)] (266 aa).

NAD(+) is bound by residues 12–20 (GAAQGIGRA), 36–37 (DW), 63–65 (CDV), and N91. Substrate contacts are provided by S138 and Q148. The active-site Proton acceptor is the Y151. Residues 151–155 (YCASK) and 186–188 (VNT) contribute to the NAD(+) site.

Belongs to the short-chain dehydrogenases/reductases (SDR) family. In terms of assembly, homodimer. Detected in colon epithelium (at protein level).

It is found in the cytoplasm. The enzyme catalyses prostaglandin E2 + NAD(+) = 15-oxoprostaglandin E2 + NADH + H(+). It carries out the reaction (15S)-hydroxy-(5Z,8Z,11Z,13E)-eicosatetraenoate + NAD(+) = 15-oxo-(5Z,8Z,11Z,13E)-eicosatetraenoate + NADH + H(+). It catalyses the reaction (11R)-hydroxy-(5Z,8Z,12E,14Z)-eicosatetraenoate + NAD(+) = 11-oxo-(5Z,8Z,12E,14Z)-eicosatetraenoate + NADH + H(+). The catalysed reaction is lipoxin A4 + NAD(+) = 15-oxo-(5S,6R)-dihydroxy-(7E,9E,11Z,13E)-eicosatetraenoate + NADH + H(+). The enzyme catalyses 15-oxo-(5S,6R)-dihydroxy-(7E,9E,11Z)-eicosatrienoate + NADH + H(+) = (5S,6R,15S)-trihydroxy-(7E,9E,11Z)-eicosatrienoate + NAD(+). It carries out the reaction prostaglandin A1 + NAD(+) = 15-oxo-prostaglandin A1 + NADH + H(+). It catalyses the reaction prostaglandin E1 + NAD(+) = 15-oxoprostaglandin E1 + NADH + H(+). The catalysed reaction is 14-hydroxy-(4Z,7Z,10Z,12E,16Z,19Z)-docosahexaenoate + NAD(+) = 14-oxo-(4Z,7Z,10Z,12E,16Z,19Z)-docosahexaenoate + NADH + H(+). The enzyme catalyses resolvin E1 + NAD(+) = 18-oxo-resolvin E1 + NADH + H(+). It carries out the reaction resolvin D1 + NAD(+) = 8-oxoresolvin D1 + NADH + H(+). It catalyses the reaction resolvin D1 + NAD(+) = 17-oxoresolvin D1 + NADH + H(+). The catalysed reaction is resolvin D2 + NAD(+) = 7-oxoresolvin D2 + NADH + H(+). The enzyme catalyses resolvin D2 + NAD(+) = 16-oxoresolvin D2 + NADH + H(+). Catalyzes the NAD-dependent dehydrogenation (oxidation) of a broad array of hydroxylated polyunsaturated fatty acids (mainly eicosanoids and docosanoids, including prostaglandins, lipoxins and resolvins), yielding their corresponding keto (oxo) metabolites. Decreases the levels of the pro-proliferative prostaglandins such as prostaglandin E2 (whose activity is increased in cancer because of an increase in the expression of cyclooxygenase 2) and generates oxo-fatty acid products that can profoundly influence cell function by abrogating pro-inflammatory cytokine expression. Converts resolvins E1, D1 and D2 to their oxo products, which represents a mode of resolvin inactivation. Resolvin E1 plays important roles during the resolution phase of acute inflammation, while resolvins D1 and D2 have a unique role in obesity-induced adipose inflammation. The sequence is that of 15-hydroxyprostaglandin dehydrogenase [NAD(+)] from Homo sapiens (Human).